The primary structure comprises 292 residues: Oxidative stress-responsive serine-rich protein 1 (292 aa).

The segment at 24–178 (ASGSVASLSV…ATQVPQASLK (155 aa)) is disordered. Residues 65 to 83 (STRKSSRGAVRTQRRRRSK) show a composition bias toward basic residues. Thr143 and Thr233 each carry phosphothreonine.

The polypeptide is Oxidative stress-responsive serine-rich protein 1 (OSER1) (Homo sapiens (Human)).